The following is a 391-amino-acid chain: Casein kinase II subunit alpha (391 aa).

Positions 36–41 (QDDYQL) are interaction with beta subunit. The 286-residue stretch at 39–324 (YQLVRKLGRG…AREAMEHPYF (286 aa)) folds into the Protein kinase domain. ATP contacts are provided by residues 45 to 53 (LGRGKYSEV) and Lys-68. The Proton acceptor role is filled by Asp-156. The segment covering 335 to 346 (GSSNMPGGSTPV) has biased composition (polar residues). The disordered stretch occupies residues 335-363 (GSSNMPGGSTPVSSASMMSGISSVPTPSP). The segment covering 347–357 (SSASMMSGISS) has biased composition (low complexity).

The protein belongs to the protein kinase superfamily. Ser/Thr protein kinase family. CK2 subfamily. As to quaternary structure, tetramer composed of an alpha chain, an alpha' and two beta chains. Interacts with RNPS1.

The protein localises to the nucleus. It catalyses the reaction L-seryl-[protein] + ATP = O-phospho-L-seryl-[protein] + ADP + H(+). It carries out the reaction L-threonyl-[protein] + ATP = O-phospho-L-threonyl-[protein] + ADP + H(+). Functionally, catalytic subunit of a constitutively active serine/threonine-protein kinase complex that phosphorylates a large number of substrates containing acidic residues C-terminal to the phosphorylated serine or threonine. Regulates numerous cellular processes, such as cell cycle progression, apoptosis and transcription, as well as viral infection. May act as a regulatory node which integrates and coordinates numerous signals leading to an appropriate cellular response. During mitosis, functions as a component of the p53/TP53-dependent spindle assembly checkpoint (SAC) that maintains cyclin-B-CDK1 activity and G2 arrest in response to spindle damage. Can also negatively regulate apoptosis. Phosphorylates the caspases CASP9 and CASP2 and the apoptotic regulator NOL3. Phosphorylation protects CASP9 from cleavage and activation by CASP8, and inhibits the dimerization of CASP2 and activation of CASP8. Plays an important role in the circadian clock function by phosphorylating BMAL1. This Gallus gallus (Chicken) protein is Casein kinase II subunit alpha (CSNK2A1).